Here is a 132-residue protein sequence, read N- to C-terminus: L-ectoine synthase (132 aa).

Belongs to the ectoine synthase family.

The catalysed reaction is (2S)-4-acetamido-2-aminobutanoate = L-ectoine + H2O. It functions in the pathway amine and polyamine biosynthesis; ectoine biosynthesis; L-ectoine from L-aspartate 4-semialdehyde: step 3/3. Its function is as follows. Catalyzes the circularization of gamma-N-acetyl-alpha,gamma-diaminobutyric acid (ADABA) to ectoine (1,4,5,6-tetrahydro-2-methyl-4-pyrimidine carboxylic acid), which is an excellent osmoprotectant. The sequence is that of L-ectoine synthase from Rhodococcus jostii (strain RHA1).